The sequence spans 166 residues: NADPH-dependent 7-cyano-7-deazaguanine reductase (166 aa).

Cysteine 57 functions as the Thioimide intermediate in the catalytic mechanism. The active-site Proton donor is aspartate 64. Residues 79–81 and 98–99 each bind substrate; these read VES and HE.

This sequence belongs to the GTP cyclohydrolase I family. QueF type 1 subfamily.

The protein localises to the cytoplasm. The enzyme catalyses 7-aminomethyl-7-carbaguanine + 2 NADP(+) = 7-cyano-7-deazaguanine + 2 NADPH + 3 H(+). It functions in the pathway tRNA modification; tRNA-queuosine biosynthesis. Functionally, catalyzes the NADPH-dependent reduction of 7-cyano-7-deazaguanine (preQ0) to 7-aminomethyl-7-deazaguanine (preQ1). The protein is NADPH-dependent 7-cyano-7-deazaguanine reductase of Alkaliphilus metalliredigens (strain QYMF).